Consider the following 300-residue polypeptide: N-carbamoylputrescine amidase (300 aa).

The CN hydrolase domain occupies 8–266; that stretch reads VTVAALQFAC…EAVLVAQFDL (259 aa). The active-site Proton acceptor is the E47. Residue K120 is the Proton donor of the active site. C157 acts as the Nucleophile in catalysis.

Belongs to the carbon-nitrogen hydrolase superfamily. In terms of assembly, homooctamer.

It carries out the reaction N-carbamoylputrescine + H2O + 2 H(+) = putrescine + NH4(+) + CO2. Its pathway is amine and polyamine biosynthesis; putrescine biosynthesis via agmatine pathway; putrescine from N-carbamoylputrescine (amidase route): step 1/1. In terms of biological role, involved in polyamine biosynthesis. This chain is N-carbamoylputrescine amidase (CPA), found in Solanum tuberosum (Potato).